The following is a 23-amino-acid chain: Septenin 2d (23 aa).

In terms of tissue distribution, expressed in skin glands.

The protein resides in the secreted. In terms of biological role, may act as an antimicrobial peptide. This chain is Septenin 2d, found in Osteopilus septentrionalis (Cuban treefrog).